Here is a 100-residue protein sequence, read N- to C-terminus: Large ribosomal subunit protein bL21 (100 aa).

Belongs to the bacterial ribosomal protein bL21 family. Part of the 50S ribosomal subunit. Contacts protein L20.

In terms of biological role, this protein binds to 23S rRNA in the presence of protein L20. The chain is Large ribosomal subunit protein bL21 from Wolbachia sp. subsp. Brugia malayi (strain TRS).